Consider the following 364-residue polypeptide: MRVLVSGGGTGGHIYPALALIREIKKLNPEARFLYIGTENGLESTIVPKTGIPFQSIVISGFKRKISLDNVKTVMRFLKGVQDSKRYIRRFNPDIVIGTGGYVCGPVVYAAAKLGIPTIVHEQNSVPGVTNKFLSRYVDKVAVCFEAAAEHFPQSKVVMTGNPRASEVMDQNGMKGKRSVGLSLPKKSVLIFGGSRGARPINDAFVEAIEQFGNKSYEILYVTGEVHYDKVMEAVKQKGNPNNVIIKPFIHNMPEVLTGVDLVVSRAGATTLAELTALGKPSVLIPSPYVTNNHQEKNARSVVDKGAAKMLLEKDLTAETLIRDIDEILLDAQTLQNMKLAAGQLGIPDAANKLYEVMNKLVKK.

Residues 10–12 (TGG), asparagine 124, serine 195, isoleucine 250, and glutamine 295 contribute to the UDP-N-acetyl-alpha-D-glucosamine site.

It belongs to the glycosyltransferase 28 family. MurG subfamily.

Its subcellular location is the cell membrane. It catalyses the reaction di-trans,octa-cis-undecaprenyl diphospho-N-acetyl-alpha-D-muramoyl-L-alanyl-D-glutamyl-meso-2,6-diaminopimeloyl-D-alanyl-D-alanine + UDP-N-acetyl-alpha-D-glucosamine = di-trans,octa-cis-undecaprenyl diphospho-[N-acetyl-alpha-D-glucosaminyl-(1-&gt;4)]-N-acetyl-alpha-D-muramoyl-L-alanyl-D-glutamyl-meso-2,6-diaminopimeloyl-D-alanyl-D-alanine + UDP + H(+). It participates in cell wall biogenesis; peptidoglycan biosynthesis. Its function is as follows. Cell wall formation. Catalyzes the transfer of a GlcNAc subunit on undecaprenyl-pyrophosphoryl-MurNAc-pentapeptide (lipid intermediate I) to form undecaprenyl-pyrophosphoryl-MurNAc-(pentapeptide)GlcNAc (lipid intermediate II). The protein is UDP-N-acetylglucosamine--N-acetylmuramyl-(pentapeptide) pyrophosphoryl-undecaprenol N-acetylglucosamine transferase 1 of Bacillus thuringiensis subsp. konkukian (strain 97-27).